A 691-amino-acid polypeptide reads, in one-letter code: Lipase 2 (691 aa).

The signal sequence occupies residues 1-37 (MLRGQEERKYSIRKYSIGVVSVLAATMFVVSSHEAQA). Over residues 34–72 (EAQASEKTPTSNAAAQKETLNQPGEQGNAITSHQMQSGK) the composition is skewed to polar residues. The interval 34–267 (EAQASEKTPT…KPTDKNTDNK (234 aa)) is disordered. A propeptide spanning residues 38-296 (SEKTPTSNAA…ADAKKVRPLK (259 aa)) is cleaved from the precursor. Residues 73-82 (QLDDMHKENG) show a composition bias toward basic and acidic residues. 3 stretches are compositionally biased toward polar residues: residues 83–115 (KSGT…NDNQ), 125–172 (SKQS…QPSI), and 186–207 (PTST…AQDA). Basic and acidic residues-rich tracts occupy residues 226-238 (IDAK…RQSE) and 258-267 (KPTDKNTDNK). The Nucleophile role is filled by Ser-413. Residue Gly-580 participates in Ca(2+) binding. The active-site Charge relay system is the Asp-604. Residue Asp-645 coordinates Ca(2+). His-646 (charge relay system) is an active-site residue. 3 residues coordinate Ca(2+): Asp-648, Asp-653, and Asp-656.

Belongs to the AB hydrolase superfamily. Lipase family.

It localises to the secreted. It carries out the reaction a triacylglycerol + H2O = a diacylglycerol + a fatty acid + H(+). The polypeptide is Lipase 2 (lip2) (Staphylococcus aureus (strain Mu50 / ATCC 700699)).